A 213-amino-acid polypeptide reads, in one-letter code: CDP-diacylglycerol--inositol 3-phosphatidyltransferase (213 aa).

Over 1-5 the chain is Cytoplasmic; it reads MPEEN. A helical transmembrane segment spans residues 6-26; sequence IFLFVPNLIGYARIVFAIISF. Position 27 (tyrosine 27) is a topological domain, lumenal. A helical membrane pass occupies residues 28–48; that stretch reads FMPCCPFTASSFYLLSGLLDA. Mg(2+) is bound by residues aspartate 47 and aspartate 50. Over 49–73 the chain is Cytoplasmic; that stretch reads FDGHAARALNQGTRFGAMLDMLTDR. 3 residues coordinate a CDP-1,2-diacyl-sn-glycerol: glycine 51, arginine 55, and threonine 61. Aspartate 68 and aspartate 72 together coordinate Mg(2+). Aspartate 72 functions as the Proton acceptor in the catalytic mechanism. Residues 74–94 form a helical membrane-spanning segment; the sequence is CATMCLLVNLALLYPRATLLF. A topological domain (lumenal) is located at residue glutamine 95. Residues 96-116 traverse the membrane as a helical segment; the sequence is LSMSLDVASHWLHLHSSVVRG. Over 117–139 the chain is Cytoplasmic; sequence SESHKMIDLSGNPVLRIYYTSRP. A helical membrane pass occupies residues 140-160; that stretch reads ALFTLCAGNELFYCLLYLFNF. Residues 161–174 are Lumenal-facing; sequence SEGPLVGSVGLFRM. The chain crosses the membrane as a helical span at residues 175–195; the sequence is GLWVTAPIALLKSVISVIHLI. The Cytoplasmic portion of the chain corresponds to 196 to 213; that stretch reads TAARNMAALDAADRAKKK.

This sequence belongs to the CDP-alcohol phosphatidyltransferase class-I family. Mn(2+) is required as a cofactor. It depends on Mg(2+) as a cofactor.

It is found in the endoplasmic reticulum membrane. The protein localises to the cell membrane. It catalyses the reaction a CDP-1,2-diacyl-sn-glycerol + myo-inositol = a 1,2-diacyl-sn-glycero-3-phospho-(1D-myo-inositol) + CMP + H(+). Functionally, catalyzes the biosynthesis of phosphatidylinositol (PtdIns) as well as PtdIns:inositol exchange reaction. May thus act to reduce an excessive cellular PtdIns content. The exchange activity is due to the reverse reaction of PtdIns synthase and is dependent on CMP, which is tightly bound to the enzyme. This chain is CDP-diacylglycerol--inositol 3-phosphatidyltransferase, found in Mus musculus (Mouse).